A 174-amino-acid polypeptide reads, in one-letter code: Protein GrpE (174 aa).

Residues 1-35 form a disordered region; that stretch reads MAQDIKNEEVEEVQEEEVVETAEETTPEKSELDLA. Residues 9 to 25 show a composition bias toward acidic residues; the sequence is EVEEVQEEEVVETAEET. A compositionally biased stretch (basic and acidic residues) spans 26 to 35; sequence TPEKSELDLA.

The protein belongs to the GrpE family. As to quaternary structure, homodimer.

The protein localises to the cytoplasm. Functionally, participates actively in the response to hyperosmotic and heat shock by preventing the aggregation of stress-denatured proteins, in association with DnaK and GrpE. It is the nucleotide exchange factor for DnaK and may function as a thermosensor. Unfolded proteins bind initially to DnaJ; upon interaction with the DnaJ-bound protein, DnaK hydrolyzes its bound ATP, resulting in the formation of a stable complex. GrpE releases ADP from DnaK; ATP binding to DnaK triggers the release of the substrate protein, thus completing the reaction cycle. Several rounds of ATP-dependent interactions between DnaJ, DnaK and GrpE are required for fully efficient folding. In Streptococcus pneumoniae (strain ATCC BAA-255 / R6), this protein is Protein GrpE.